Reading from the N-terminus, the 359-residue chain is tRNA-specific 2-thiouridylase MnmA (359 aa).

ATP-binding positions include 7–14 (GLSGGVDS) and Leu33. Residue Cys94 is the Nucleophile of the active site. The cysteines at positions 94 and 193 are disulfide-linked. Residue Gly119 participates in ATP binding. The segment at 143–145 (KDQ) is interaction with tRNA. Cys193 functions as the Cysteine persulfide intermediate in the catalytic mechanism. Residues 298-299 (RY) are interaction with tRNA.

Belongs to the MnmA/TRMU family.

Its subcellular location is the cytoplasm. The catalysed reaction is S-sulfanyl-L-cysteinyl-[protein] + uridine(34) in tRNA + AH2 + ATP = 2-thiouridine(34) in tRNA + L-cysteinyl-[protein] + A + AMP + diphosphate + H(+). Its function is as follows. Catalyzes the 2-thiolation of uridine at the wobble position (U34) of tRNA, leading to the formation of s(2)U34. The sequence is that of tRNA-specific 2-thiouridylase MnmA from Trichodesmium erythraeum (strain IMS101).